Here is a 563-residue protein sequence, read N- to C-terminus: Arginine--tRNA ligase (563 aa).

The 'HIGH' region motif lies at 120 to 130; it reads PNIAKPFHVGH.

The protein belongs to the class-I aminoacyl-tRNA synthetase family. In terms of assembly, monomer.

Its subcellular location is the cytoplasm. It catalyses the reaction tRNA(Arg) + L-arginine + ATP = L-arginyl-tRNA(Arg) + AMP + diphosphate. This chain is Arginine--tRNA ligase, found in Clostridium botulinum (strain Alaska E43 / Type E3).